Here is a 133-residue protein sequence, read N- to C-terminus: NADPH-dependent 7-cyano-7-deazaguanine reductase (133 aa).

The active-site Thioimide intermediate is Cys46. Residue Asp53 is the Proton donor of the active site. Substrate contacts are provided by residues 68–70 (VEL) and 87–88 (HE).

Belongs to the GTP cyclohydrolase I family. QueF type 1 subfamily.

The protein localises to the cytoplasm. It catalyses the reaction 7-aminomethyl-7-carbaguanine + 2 NADP(+) = 7-cyano-7-deazaguanine + 2 NADPH + 3 H(+). The protein operates within tRNA modification; tRNA-queuosine biosynthesis. In terms of biological role, catalyzes the NADPH-dependent reduction of 7-cyano-7-deazaguanine (preQ0) to 7-aminomethyl-7-deazaguanine (preQ1). The protein is NADPH-dependent 7-cyano-7-deazaguanine reductase of Parasynechococcus marenigrum (strain WH8102).